The primary structure comprises 300 residues: Vetispiradiene synthase 2 (300 aa).

Mg(2+) contacts are provided by Asp-54, Asp-58, Asp-197, Thr-201, and Glu-205. Positions Asp-54–Asp-58 match the DDXXD motif motif.

This sequence belongs to the terpene synthase family. Tpsa subfamily. Mg(2+) serves as cofactor.

The protein resides in the cytoplasm. The enzyme catalyses (2E,6E)-farnesyl diphosphate = (-)-vetispiradiene + diphosphate. Its pathway is secondary metabolite biosynthesis; terpenoid biosynthesis. In terms of biological role, sesquiterpene synthase that catalyzes the formation of vetispiradiene from trans,trans-farnesyl diphosphate. The initial internal cyclization produces the monocyclic intermediate germacrene A. In Hyoscyamus muticus (Egyptian henbane), this protein is Vetispiradiene synthase 2.